Consider the following 267-residue polypeptide: 4-hydroxy-tetrahydrodipicolinate reductase (267 aa).

Residues 12 to 17 (GPRGRM), 100 to 102 (GTT), and 126 to 129 (APNF) each bind NAD(+). The Proton donor/acceptor role is filled by H156. Position 157 (H157) interacts with (S)-2,3,4,5-tetrahydrodipicolinate. K160 serves as the catalytic Proton donor. 166-167 (GT) is a binding site for (S)-2,3,4,5-tetrahydrodipicolinate.

It belongs to the DapB family.

Its subcellular location is the cytoplasm. The enzyme catalyses (S)-2,3,4,5-tetrahydrodipicolinate + NAD(+) + H2O = (2S,4S)-4-hydroxy-2,3,4,5-tetrahydrodipicolinate + NADH + H(+). The catalysed reaction is (S)-2,3,4,5-tetrahydrodipicolinate + NADP(+) + H2O = (2S,4S)-4-hydroxy-2,3,4,5-tetrahydrodipicolinate + NADPH + H(+). Its pathway is amino-acid biosynthesis; L-lysine biosynthesis via DAP pathway; (S)-tetrahydrodipicolinate from L-aspartate: step 4/4. Its function is as follows. Catalyzes the conversion of 4-hydroxy-tetrahydrodipicolinate (HTPA) to tetrahydrodipicolinate. The polypeptide is 4-hydroxy-tetrahydrodipicolinate reductase (Bacillus velezensis (strain DSM 23117 / BGSC 10A6 / LMG 26770 / FZB42) (Bacillus amyloliquefaciens subsp. plantarum)).